Consider the following 305-residue polypeptide: tRNA dimethylallyltransferase 1 (305 aa).

ATP is bound at residue Gly-10 to Ser-17. Thr-12–Ser-17 is a substrate binding site. An interaction with substrate tRNA region spans residues Asp-35–Thr-38.

The protein belongs to the IPP transferase family. As to quaternary structure, monomer. Requires Mg(2+) as cofactor.

It carries out the reaction adenosine(37) in tRNA + dimethylallyl diphosphate = N(6)-dimethylallyladenosine(37) in tRNA + diphosphate. Its function is as follows. Catalyzes the transfer of a dimethylallyl group onto the adenine at position 37 in tRNAs that read codons beginning with uridine, leading to the formation of N6-(dimethylallyl)adenosine (i(6)A). In Trichlorobacter lovleyi (strain ATCC BAA-1151 / DSM 17278 / SZ) (Geobacter lovleyi), this protein is tRNA dimethylallyltransferase 1.